Here is a 434-residue protein sequence, read N- to C-terminus: Gamma-enolase (434 aa).

Ser-2 carries the post-translational modification N-acetylserine. Position 5 is an N6-acetyllysine (Lys-5). Thr-26 bears the Phosphothreonine mark. A Mg(2+)-binding site is contributed by Ser-40. At Tyr-44 the chain carries Phosphotyrosine. Lys-60 bears the N6-acetyllysine; alternate mark. Lys-60 carries the post-translational modification N6-succinyllysine; alternate. Lys-64 carries the post-translational modification N6-acetyllysine. The residue at position 89 (Lys-89) is an N6-acetyllysine; alternate. The residue at position 89 (Lys-89) is an N6-succinyllysine; alternate. His-158 and Glu-167 together coordinate substrate. An N6-acetyllysine mark is found at Lys-193, Lys-197, and Lys-199. Position 202 is an N6-acetyllysine; alternate (Lys-202). Residue Lys-202 forms a Glycyl lysine isopeptide (Lys-Gly) (interchain with G-Cter in SUMO2); alternate linkage. The Proton donor role is filled by Glu-210. Residues Lys-228 and Lys-233 each carry the N6-acetyllysine; alternate modification. At Lys-228 the chain carries N6-succinyllysine; alternate. Lys-233 is subject to N6-(2-hydroxyisobutyryl)lysine; alternate. Asp-245 contacts Mg(2+). Residue Lys-256 is modified to N6-acetyllysine. Ser-263 is subject to Phosphoserine. The residue at position 287 (Tyr-287) is a Phosphotyrosine. Ser-291 is subject to Phosphoserine. Mg(2+) is bound by residues Glu-293 and Asp-318. Substrate-binding residues include Glu-293 and Asp-318. Residues Lys-335 and Lys-343 each carry the N6-acetyllysine modification. Lys-343 acts as the Proton acceptor in catalysis. Substrate-binding positions include 370–373 and Lys-394; that span reads SHRS. Lys-406 is modified (N6-acetyllysine).

This sequence belongs to the enolase family. Mammalian enolase is composed of 3 isozyme subunits, alpha, beta and gamma, which can form homodimers or heterodimers which are cell-type and development-specific. The cofactor is Mg(2+). As to expression, the alpha/alpha homodimer is expressed in embryo and in most adult tissues. The alpha/beta heterodimer and the beta/beta homodimer are found in striated muscle, and the alpha/gamma heterodimer and the gamma/gamma homodimer in neurons.

The protein resides in the cytoplasm. Its subcellular location is the cell membrane. It carries out the reaction (2R)-2-phosphoglycerate = phosphoenolpyruvate + H2O. The protein operates within carbohydrate degradation; glycolysis; pyruvate from D-glyceraldehyde 3-phosphate: step 4/5. Its function is as follows. Has neurotrophic and neuroprotective properties on a broad spectrum of central nervous system (CNS) neurons. Binds, in a calcium-dependent manner, to cultured neocortical neurons and promotes cell survival. This chain is Gamma-enolase (ENO2), found in Homo sapiens (Human).